Reading from the N-terminus, the 141-residue chain is MAKKIAGYVKLQIPAGKATPAPPVGPALGQHGVNIMGFCKEFNERTAKDAGLVIPVVITVYADRSFSFITKTPPAAVLLKKACKIESGSGKPNKDKVAKITMDEVRKIAEQKMPDLNAASVDAATKMIAGTARSMGIVVVE.

It belongs to the universal ribosomal protein uL11 family. In terms of assembly, part of the ribosomal stalk of the 50S ribosomal subunit. Interacts with L10 and the large rRNA to form the base of the stalk. L10 forms an elongated spine to which L12 dimers bind in a sequential fashion forming a multimeric L10(L12)X complex. In terms of processing, one or more lysine residues are methylated.

Its function is as follows. Forms part of the ribosomal stalk which helps the ribosome interact with GTP-bound translation factors. This chain is Large ribosomal subunit protein uL11, found in Ruminiclostridium cellulolyticum (strain ATCC 35319 / DSM 5812 / JCM 6584 / H10) (Clostridium cellulolyticum).